A 951-amino-acid chain; its full sequence is Bifunctional glutamine synthetase adenylyltransferase/adenylyl-removing enzyme (951 aa).

The interval 1–440 is adenylyl removase; sequence MLPLPSELQI…VFDDLIGDET (440 aa). Residues 449–951 are adenylyl transferase; that stretch reads HGLYKSLWQD…WLAANDANVS (503 aa).

It belongs to the GlnE family. The cofactor is Mg(2+).

It catalyses the reaction [glutamine synthetase]-O(4)-(5'-adenylyl)-L-tyrosine + phosphate = [glutamine synthetase]-L-tyrosine + ADP. It carries out the reaction [glutamine synthetase]-L-tyrosine + ATP = [glutamine synthetase]-O(4)-(5'-adenylyl)-L-tyrosine + diphosphate. Involved in the regulation of glutamine synthetase GlnA, a key enzyme in the process to assimilate ammonia. When cellular nitrogen levels are high, the C-terminal adenylyl transferase (AT) inactivates GlnA by covalent transfer of an adenylyl group from ATP to specific tyrosine residue of GlnA, thus reducing its activity. Conversely, when nitrogen levels are low, the N-terminal adenylyl removase (AR) activates GlnA by removing the adenylyl group by phosphorolysis, increasing its activity. The regulatory region of GlnE binds the signal transduction protein PII (GlnB) which indicates the nitrogen status of the cell. In Yersinia pseudotuberculosis serotype O:1b (strain IP 31758), this protein is Bifunctional glutamine synthetase adenylyltransferase/adenylyl-removing enzyme.